Consider the following 428-residue polypeptide: Histidine--tRNA ligase (428 aa).

This sequence belongs to the class-II aminoacyl-tRNA synthetase family. Homodimer.

The protein resides in the cytoplasm. The enzyme catalyses tRNA(His) + L-histidine + ATP = L-histidyl-tRNA(His) + AMP + diphosphate + H(+). In Mesomycoplasma hyopneumoniae (strain J / ATCC 25934 / NCTC 10110) (Mycoplasma hyopneumoniae), this protein is Histidine--tRNA ligase.